Here is a 516-residue protein sequence, read N- to C-terminus: Ammonium transporter Amt1 (516 aa).

11 consecutive transmembrane segments (helical) span residues 17 to 37, 59 to 79, 101 to 121, 130 to 150, 170 to 190, 214 to 234, 258 to 278, 286 to 306, 307 to 327, 342 to 362, and 374 to 394; these read YVWI…FALL, ALGV…VGGL, IDWL…SGAV, YVVF…GLTW, LDFA…LVGA, MLLA…FNVG, VALV…VVST, PLWM…AVPH, VTWW…LPAY, VFAV…VFAV, and VAGV…VFAA. Residues 426-516 are disordered; it reads IGESGPDRGV…SAAVDGGENQ (91 aa). The span at 445–491 shows a compositional bias: basic and acidic residues; that stretch reads NDVRTDGGNDVRTDGGNDVRTDGGNDVRTDGGNDVRTDGGNDVRTDG.

The protein belongs to the ammonia transporter channel (TC 1.A.11.2) family. As to quaternary structure, homotrimer. Interacts with both GlnK1 and GlnK2 after ammonium shock. Interaction is rapid, reversible and dependent on nitrogen source.

It localises to the cell membrane. Its function is as follows. Involved in the uptake of ammonium/ammonia (NH(4)(+)/NH(3)). Transport is electrogenic. The polypeptide is Ammonium transporter Amt1 (Haloferax mediterranei (strain ATCC 33500 / DSM 1411 / JCM 8866 / NBRC 14739 / NCIMB 2177 / R-4) (Halobacterium mediterranei)).